We begin with the raw amino-acid sequence, 412 residues long: Gamma-glutamyl phosphate reductase (412 aa).

It belongs to the gamma-glutamyl phosphate reductase family.

It is found in the cytoplasm. It carries out the reaction L-glutamate 5-semialdehyde + phosphate + NADP(+) = L-glutamyl 5-phosphate + NADPH + H(+). Its pathway is amino-acid biosynthesis; L-proline biosynthesis; L-glutamate 5-semialdehyde from L-glutamate: step 2/2. Its function is as follows. Catalyzes the NADPH-dependent reduction of L-glutamate 5-phosphate into L-glutamate 5-semialdehyde and phosphate. The product spontaneously undergoes cyclization to form 1-pyrroline-5-carboxylate. The protein is Gamma-glutamyl phosphate reductase of Actinobacillus pleuropneumoniae serotype 5b (strain L20).